A 607-amino-acid polypeptide reads, in one-letter code: Thymidine kinase (607 aa).

Disordered stretches follow at residues 1–160 and 180–215; these read MAGF…ADST and DDKSDCESEDESNFRRPSSHSALKQKNGGKGKPSGL. Residues 17 to 32 are compositionally biased toward basic and acidic residues; the sequence is KCQEDESPENERHENF. Polar residues-rich tracts occupy residues 88 to 106, 148 to 160, and 194 to 203; these read AAVTSNTGNSPGSRHTSCP, RKTSCTEGGADST, and RRPSSHSALK. 291-298 is a binding site for ATP; that stretch reads GAPGVGKT. Residue glutamate 317 is the Proton acceptor of the active site. Glutamine 355 is a substrate binding site. Arginine 445 serves as a coordination point for ATP. Residue arginine 451 participates in substrate binding.

Belongs to the herpesviridae thymidine kinase family. In terms of assembly, homodimer.

It is found in the virion tegument. Its subcellular location is the host nucleus. The enzyme catalyses thymidine + ATP = dTMP + ADP + H(+). Its function is as follows. Catalyzes the transfer of the gamma-phospho group of ATP to thymidine to generate dTMP in the salvage pathway of pyrimidine synthesis. The dTMP serves as a substrate for DNA polymerase during viral DNA replication. Allows the virus to be reactivated and to grow in non-proliferative cells lacking a high concentration of phosphorylated nucleic acid precursors. In Epstein-Barr virus (strain AG876) (HHV-4), this protein is Thymidine kinase.